The sequence spans 464 residues: UDP-N-acetylmuramoylalanine--D-glutamate ligase (464 aa).

ATP is bound at residue 112-118; sequence GTDGKTT.

The protein belongs to the MurCDEF family.

Its subcellular location is the cytoplasm. It catalyses the reaction UDP-N-acetyl-alpha-D-muramoyl-L-alanine + D-glutamate + ATP = UDP-N-acetyl-alpha-D-muramoyl-L-alanyl-D-glutamate + ADP + phosphate + H(+). The protein operates within cell wall biogenesis; peptidoglycan biosynthesis. Cell wall formation. Catalyzes the addition of glutamate to the nucleotide precursor UDP-N-acetylmuramoyl-L-alanine (UMA). The polypeptide is UDP-N-acetylmuramoylalanine--D-glutamate ligase (Chlorobium phaeobacteroides (strain DSM 266 / SMG 266 / 2430)).